Here is a 173-residue protein sequence, read N- to C-terminus: Methylated-DNA--protein-cysteine methyltransferase (173 aa).

Cysteine 143 (nucleophile; methyl group acceptor) is an active-site residue.

The protein belongs to the MGMT family.

It localises to the cytoplasm. It carries out the reaction a 6-O-methyl-2'-deoxyguanosine in DNA + L-cysteinyl-[protein] = S-methyl-L-cysteinyl-[protein] + a 2'-deoxyguanosine in DNA. The enzyme catalyses a 4-O-methyl-thymidine in DNA + L-cysteinyl-[protein] = a thymidine in DNA + S-methyl-L-cysteinyl-[protein]. Functionally, involved in the cellular defense against the biological effects of O6-methylguanine (O6-MeG) and O4-methylthymine (O4-MeT) in DNA. Repairs the methylated nucleobase in DNA by stoichiometrically transferring the methyl group to a cysteine residue in the enzyme. This is a suicide reaction: the enzyme is irreversibly inactivated. This Pyrococcus sp. (strain NA2) protein is Methylated-DNA--protein-cysteine methyltransferase.